A 156-amino-acid polypeptide reads, in one-letter code: 6,7-dimethyl-8-ribityllumazine synthase (156 aa).

5-amino-6-(D-ribitylamino)uracil contacts are provided by residues Phe-22, 57 to 59, and 81 to 83; these read AYE and TVI. 86-87 contacts (2S)-2-hydroxy-3-oxobutyl phosphate; sequence GT. The Proton donor role is filled by His-89. Phe-114 contributes to the 5-amino-6-(D-ribitylamino)uracil binding site. Arg-128 is a binding site for (2S)-2-hydroxy-3-oxobutyl phosphate.

It belongs to the DMRL synthase family. In terms of assembly, forms an icosahedral capsid composed of 60 subunits, arranged as a dodecamer of pentamers.

The catalysed reaction is (2S)-2-hydroxy-3-oxobutyl phosphate + 5-amino-6-(D-ribitylamino)uracil = 6,7-dimethyl-8-(1-D-ribityl)lumazine + phosphate + 2 H2O + H(+). It functions in the pathway cofactor biosynthesis; riboflavin biosynthesis; riboflavin from 2-hydroxy-3-oxobutyl phosphate and 5-amino-6-(D-ribitylamino)uracil: step 1/2. Catalyzes the formation of 6,7-dimethyl-8-ribityllumazine by condensation of 5-amino-6-(D-ribitylamino)uracil with 3,4-dihydroxy-2-butanone 4-phosphate. This is the penultimate step in the biosynthesis of riboflavin. In Erwinia tasmaniensis (strain DSM 17950 / CFBP 7177 / CIP 109463 / NCPPB 4357 / Et1/99), this protein is 6,7-dimethyl-8-ribityllumazine synthase.